The sequence spans 530 residues: uncharacterized protein (530 aa).

This is an uncharacterized protein from Acanthamoeba polyphaga (Amoeba).